Here is a 154-residue protein sequence, read N- to C-terminus: Transcriptional repressor NrdR (154 aa).

Residues 1–22 (MECPNCHKNASRVIDSRPSDEN) form a disordered region. The segment at 3–34 (CPNCHKNASRVIDSRPSDENRAIRRRRECENC) is a zinc-finger region. Residues 49 to 139 (LLVIKNDGTR…IYRQFKDVSG (91 aa)) form the ATP-cone domain.

The protein belongs to the NrdR family. The cofactor is Zn(2+).

In terms of biological role, negatively regulates transcription of bacterial ribonucleotide reductase nrd genes and operons by binding to NrdR-boxes. This chain is Transcriptional repressor NrdR, found in Lactobacillus gasseri (strain ATCC 33323 / DSM 20243 / BCRC 14619 / CIP 102991 / JCM 1131 / KCTC 3163 / NCIMB 11718 / NCTC 13722 / AM63).